A 687-amino-acid polypeptide reads, in one-letter code: FAD-dependent oxidoreductase domain-containing protein 2 (687 aa).

Positions Met-1–Ala-22 are cleaved as a signal peptide. Residues Asn-29 and Asn-305 are each glycosylated (N-linked (GlcNAc...) asparagine).

The protein belongs to the FOXRED2 family. FAD is required as a cofactor. N-glycosylated.

Its subcellular location is the endoplasmic reticulum lumen. In terms of biological role, probable flavoprotein which may function in endoplasmic reticulum associated degradation (ERAD). May bind non-native proteins in the endoplasmic reticulum and target them to the ubiquitination machinery for subsequent degradation. This chain is FAD-dependent oxidoreductase domain-containing protein 2 (foxred2), found in Danio rerio (Zebrafish).